Here is a 464-residue protein sequence, read N- to C-terminus: tRNA-2-methylthio-N(6)-dimethylallyladenosine synthase (464 aa).

The region spanning 19–135 (GSYWITTFGC…LENLLERVDS (117 aa)) is the MTTase N-terminal domain. Positions 28, 64, 98, 170, 174, and 177 each coordinate [4Fe-4S] cluster. In terms of domain architecture, Radical SAM core spans 156-393 (RDSTICGWVN…NELVEATSRK (238 aa)). The region spanning 396 to 464 (QRYLNNTESV…SFSLSGQIYK (69 aa)) is the TRAM domain.

Belongs to the methylthiotransferase family. MiaB subfamily. Monomer. [4Fe-4S] cluster is required as a cofactor.

It is found in the cytoplasm. The catalysed reaction is N(6)-dimethylallyladenosine(37) in tRNA + (sulfur carrier)-SH + AH2 + 2 S-adenosyl-L-methionine = 2-methylsulfanyl-N(6)-dimethylallyladenosine(37) in tRNA + (sulfur carrier)-H + 5'-deoxyadenosine + L-methionine + A + S-adenosyl-L-homocysteine + 2 H(+). In terms of biological role, catalyzes the methylthiolation of N6-(dimethylallyl)adenosine (i(6)A), leading to the formation of 2-methylthio-N6-(dimethylallyl)adenosine (ms(2)i(6)A) at position 37 in tRNAs that read codons beginning with uridine. This Prochlorococcus marinus (strain MIT 9515) protein is tRNA-2-methylthio-N(6)-dimethylallyladenosine synthase.